Reading from the N-terminus, the 156-residue chain is Protein LlR18B (156 aa).

Positions 8 and 28 each coordinate trans-zeatin. Ca(2+)-binding residues include P32 and I38. The trans-zeatin site is built by K54, E133, and K136.

It belongs to the BetVI family. As to expression, ubiquitous, with higher levels in roots.

The protein resides in the cytoplasm. The protein localises to the cytosol. In terms of biological role, class II ribonuclease (RNase), with low activity on single-strand RNA. Binds to cytokinins. Interacts with melatonin. The protein is Protein LlR18B (LLR18B) of Lupinus luteus (European yellow lupine).